The following is a 1400-amino-acid chain: DNA-directed RNA polymerase subunit beta' (1400 aa).

4 residues coordinate Zn(2+): Cys-71, Cys-73, Cys-86, and Cys-89. Residues Asp-462, Asp-464, and Asp-466 each coordinate Mg(2+). Residues Cys-810, Cys-884, Cys-891, and Cys-894 each contribute to the Zn(2+) site. The tract at residues 1377 to 1400 (REKQATIVPPAAPEAEPLALPPVE) is disordered.

This sequence belongs to the RNA polymerase beta' chain family. The RNAP catalytic core consists of 2 alpha, 1 beta, 1 beta' and 1 omega subunit. When a sigma factor is associated with the core the holoenzyme is formed, which can initiate transcription. The cofactor is Mg(2+). It depends on Zn(2+) as a cofactor.

The catalysed reaction is RNA(n) + a ribonucleoside 5'-triphosphate = RNA(n+1) + diphosphate. Its function is as follows. DNA-dependent RNA polymerase catalyzes the transcription of DNA into RNA using the four ribonucleoside triphosphates as substrates. The chain is DNA-directed RNA polymerase subunit beta' from Rhodopseudomonas palustris (strain HaA2).